Reading from the N-terminus, the 141-residue chain is Small ribosomal subunit protein uS12 (141 aa).

Asp-89 carries the post-translational modification 3-methylthioaspartic acid. The interval 104-141 (ASGAVGPSNTNKLNRNVSRSKYGVKRPKAGAKPASKAK) is disordered. Over residues 110-122 (PSNTNKLNRNVSR) the composition is skewed to polar residues. Basic residues predominate over residues 125–141 (YGVKRPKAGAKPASKAK).

Belongs to the universal ribosomal protein uS12 family. In terms of assembly, part of the 30S ribosomal subunit. Contacts proteins S8 and S17. May interact with IF1 in the 30S initiation complex.

Functionally, with S4 and S5 plays an important role in translational accuracy. Its function is as follows. Interacts with and stabilizes bases of the 16S rRNA that are involved in tRNA selection in the A site and with the mRNA backbone. Located at the interface of the 30S and 50S subunits, it traverses the body of the 30S subunit contacting proteins on the other side and probably holding the rRNA structure together. The combined cluster of proteins S8, S12 and S17 appears to hold together the shoulder and platform of the 30S subunit. This Methylacidiphilum infernorum (isolate V4) (Methylokorus infernorum (strain V4)) protein is Small ribosomal subunit protein uS12.